A 265-amino-acid polypeptide reads, in one-letter code: Adenosylcobinamide-GDP ribazoletransferase (265 aa).

4 helical membrane-spanning segments follow: residues 51-71 (LVGVILGVLCALVFYFTQLIF), 72-92 (PDSVAIVLTMAFSLLLTGAFH), 121-140 (IGTYGAATLVMALLAKFVLW), and 203-223 (VASLFLGVIQTSFIVIVLFAF).

Belongs to the CobS family. Mg(2+) is required as a cofactor.

The protein resides in the cell inner membrane. The catalysed reaction is alpha-ribazole + adenosylcob(III)inamide-GDP = adenosylcob(III)alamin + GMP + H(+). It catalyses the reaction alpha-ribazole 5'-phosphate + adenosylcob(III)inamide-GDP = adenosylcob(III)alamin 5'-phosphate + GMP + H(+). It participates in cofactor biosynthesis; adenosylcobalamin biosynthesis; adenosylcobalamin from cob(II)yrinate a,c-diamide: step 7/7. Its function is as follows. Joins adenosylcobinamide-GDP and alpha-ribazole to generate adenosylcobalamin (Ado-cobalamin). Also synthesizes adenosylcobalamin 5'-phosphate from adenosylcobinamide-GDP and alpha-ribazole 5'-phosphate. In Vibrio parahaemolyticus serotype O3:K6 (strain RIMD 2210633), this protein is Adenosylcobinamide-GDP ribazoletransferase.